We begin with the raw amino-acid sequence, 212 residues long: 3-isopropylmalate dehydratase small subunit (212 aa).

The protein belongs to the LeuD family. LeuD type 1 subfamily. As to quaternary structure, heterodimer of LeuC and LeuD.

The enzyme catalyses (2R,3S)-3-isopropylmalate = (2S)-2-isopropylmalate. It functions in the pathway amino-acid biosynthesis; L-leucine biosynthesis; L-leucine from 3-methyl-2-oxobutanoate: step 2/4. Catalyzes the isomerization between 2-isopropylmalate and 3-isopropylmalate, via the formation of 2-isopropylmaleate. This is 3-isopropylmalate dehydratase small subunit from Methylococcus capsulatus (strain ATCC 33009 / NCIMB 11132 / Bath).